Here is a 335-residue protein sequence, read N- to C-terminus: Glycerol-3-phosphate dehydrogenase [NAD(P)+] (335 aa).

Residues tryptophan 14, arginine 33, and lysine 111 each coordinate NADPH. Sn-glycerol 3-phosphate-binding residues include lysine 111, glycine 140, and serine 142. Alanine 144 lines the NADPH pocket. Lysine 195, aspartate 248, serine 258, arginine 259, and asparagine 260 together coordinate sn-glycerol 3-phosphate. The active-site Proton acceptor is lysine 195. Position 259 (arginine 259) interacts with NADPH. 2 residues coordinate NADPH: valine 283 and glutamate 285.

Belongs to the NAD-dependent glycerol-3-phosphate dehydrogenase family.

The protein resides in the cytoplasm. It carries out the reaction sn-glycerol 3-phosphate + NAD(+) = dihydroxyacetone phosphate + NADH + H(+). The enzyme catalyses sn-glycerol 3-phosphate + NADP(+) = dihydroxyacetone phosphate + NADPH + H(+). Its pathway is membrane lipid metabolism; glycerophospholipid metabolism. In terms of biological role, catalyzes the reduction of the glycolytic intermediate dihydroxyacetone phosphate (DHAP) to sn-glycerol 3-phosphate (G3P), the key precursor for phospholipid synthesis. The chain is Glycerol-3-phosphate dehydrogenase [NAD(P)+] from Burkholderia mallei (strain NCTC 10247).